Consider the following 557-residue polypeptide: CTP synthase (557 aa).

The tract at residues 1–270 (MTKYVFVTGG…DAIICEELKL (270 aa)) is amidoligase domain. Serine 13 is a binding site for CTP. A UTP-binding site is contributed by serine 13. Residues 14–19 (SLGKGI) and aspartate 71 each bind ATP. Residues aspartate 71 and glutamate 144 each coordinate Mg(2+). CTP contacts are provided by residues 151 to 153 (DIE), 191 to 196 (KTKPTQ), and lysine 227. UTP-binding positions include 191-196 (KTKPTQ) and lysine 227. The region spanning 295-547 (TIGMVGKYVD…VEAALAHQQS (253 aa)) is the Glutamine amidotransferase type-1 domain. Glycine 356 provides a ligand contact to L-glutamine. Cysteine 383 functions as the Nucleophile; for glutamine hydrolysis in the catalytic mechanism. L-glutamine contacts are provided by residues 384-387 (LGMQ), glutamate 407, and arginine 473. Active-site residues include histidine 520 and glutamate 522.

The protein belongs to the CTP synthase family. As to quaternary structure, homotetramer.

It catalyses the reaction UTP + L-glutamine + ATP + H2O = CTP + L-glutamate + ADP + phosphate + 2 H(+). It carries out the reaction L-glutamine + H2O = L-glutamate + NH4(+). The enzyme catalyses UTP + NH4(+) + ATP = CTP + ADP + phosphate + 2 H(+). Its pathway is pyrimidine metabolism; CTP biosynthesis via de novo pathway; CTP from UDP: step 2/2. With respect to regulation, allosterically activated by GTP, when glutamine is the substrate; GTP has no effect on the reaction when ammonia is the substrate. The allosteric effector GTP functions by stabilizing the protein conformation that binds the tetrahedral intermediate(s) formed during glutamine hydrolysis. Inhibited by the product CTP, via allosteric rather than competitive inhibition. Catalyzes the ATP-dependent amination of UTP to CTP with either L-glutamine or ammonia as the source of nitrogen. Regulates intracellular CTP levels through interactions with the four ribonucleotide triphosphates. The polypeptide is CTP synthase (Paraburkholderia xenovorans (strain LB400)).